Consider the following 130-residue polypeptide: Small ribosomal subunit protein uS9 (130 aa).

This sequence belongs to the universal ribosomal protein uS9 family.

The sequence is that of Small ribosomal subunit protein uS9 from Exiguobacterium sibiricum (strain DSM 17290 / CCUG 55495 / CIP 109462 / JCM 13490 / 255-15).